Consider the following 177-residue polypeptide: Large ribosomal subunit protein uL6 (177 aa).

It belongs to the universal ribosomal protein uL6 family. Part of the 50S ribosomal subunit.

Functionally, this protein binds to the 23S rRNA, and is important in its secondary structure. It is located near the subunit interface in the base of the L7/L12 stalk, and near the tRNA binding site of the peptidyltransferase center. The sequence is that of Large ribosomal subunit protein uL6 from Salmonella newport (strain SL254).